The chain runs to 38 residues: Cytochrome b6-f complex subunit 5 (38 aa).

The helical transmembrane segment at 5–25 (LLCGIVLGLIPVTLLGLFVAA) threads the bilayer.

Belongs to the PetG family. In terms of assembly, the 4 large subunits of the cytochrome b6-f complex are cytochrome b6, subunit IV (17 kDa polypeptide, PetD), cytochrome f and the Rieske protein, while the 4 small subunits are PetG, PetL, PetM and PetN. The complex functions as a dimer.

It localises to the cellular thylakoid membrane. Its function is as follows. Component of the cytochrome b6-f complex, which mediates electron transfer between photosystem II (PSII) and photosystem I (PSI), cyclic electron flow around PSI, and state transitions. PetG is required for either the stability or assembly of the cytochrome b6-f complex. The polypeptide is Cytochrome b6-f complex subunit 5 (Parasynechococcus marenigrum (strain WH8102)).